A 451-amino-acid polypeptide reads, in one-letter code: 3-phosphoshikimate 1-carboxyvinyltransferase (451 aa).

3 residues coordinate 3-phosphoshikimate: Lys-28, Ser-29, and Arg-33. A phosphoenolpyruvate-binding site is contributed by Lys-28. Gly-105 and Arg-133 together coordinate phosphoenolpyruvate. Residues Ser-178, Gln-180, Asp-331, and Lys-358 each contribute to the 3-phosphoshikimate site. Gln-180 lines the phosphoenolpyruvate pocket. The active-site Proton acceptor is Asp-331. Residues Arg-362 and Arg-406 each contribute to the phosphoenolpyruvate site.

This sequence belongs to the EPSP synthase family. In terms of assembly, monomer.

The protein resides in the cytoplasm. It catalyses the reaction 3-phosphoshikimate + phosphoenolpyruvate = 5-O-(1-carboxyvinyl)-3-phosphoshikimate + phosphate. It participates in metabolic intermediate biosynthesis; chorismate biosynthesis; chorismate from D-erythrose 4-phosphate and phosphoenolpyruvate: step 6/7. In terms of biological role, catalyzes the transfer of the enolpyruvyl moiety of phosphoenolpyruvate (PEP) to the 5-hydroxyl of shikimate-3-phosphate (S3P) to produce enolpyruvyl shikimate-3-phosphate and inorganic phosphate. The sequence is that of 3-phosphoshikimate 1-carboxyvinyltransferase from Rhodospirillum rubrum (strain ATCC 11170 / ATH 1.1.1 / DSM 467 / LMG 4362 / NCIMB 8255 / S1).